The sequence spans 320 residues: MAKTVSIPSVTLGSTGITMPLVGFGTVEYPLCEWFKDAVLHAIKLGYRHFDTASTYPSEQPLGEAITEALRLGLIKSRDELFITSKLWLTDSFPDRVIPALKKSLKNMGLEYLDCYLIHFPVCLIPEATYPVKKEDIRPMDFEGVWAAMEECQKLGLTKTIGVSNFTAKKLERILATAKILPAVNQVEMNPVWQQKKLRQFCEEKGIHFSAFSPLGAVGTDWGHNRVMECEVLKEIAKAKGKSLAQIAIRWVYQQGVSVITKSFNKQRMEENLDIFDWKLTPEELHKIDQIPQYRGSRGETFVSENGPYKTLEEMWDGEI.

Aspartate 51 provides a ligand contact to NADP(+). The Proton donor role is filled by tyrosine 56. Residues glutamine 186 and 264 to 272 each bind NADP(+); that span reads FNKQRMEEN.

The protein belongs to the aldo/keto reductase family. In terms of tissue distribution, mainly expressed in petioles and, to a lower extent, in roots.

The enzyme catalyses 7-acetyl-epi-neemfruitin B + AH2 + H2O = (1S,3bR,4R,5aR,9aR,9bR,11aS)-1-[(4R)-5-[(2S)-3,3-dimethyloxiran-2-yl]-1,4-dihydroxybutan-2-yl]-3b,6,6,9a,11a-pentamethyl-7-oxo-1H,2H,3bH,4H,5H,5aH,6H,7H,9aH,9bH,10H,11H,11aH-cyclopenta[a]phenanthren-4-yl acetate + acetate + A + H(+). The protein operates within secondary metabolite biosynthesis; terpenoid biosynthesis. Its function is as follows. Aldo-keto reductase involved in the biosynthesis of limonoids triterpene natural products such as azadirachtin, an antifeedant widely used as bioinsecticide, and possessing many medicinal applications including anti-tumoral, anti-malarial, anti-rheumatic, antibacterial, anti-inflammatory, anti-pyretic and diuretic effects. Can use 7-acetyl-epi-neemfruitin B as substrate. The chain is 7-acetyl-epi-neemfruitin B aldo-keto reductase from Melia azedarach (Chinaberry tree).